Consider the following 443-residue polypeptide: Adenylosuccinate synthetase (443 aa).

GTP-binding positions include 12-18 (GDEGKGK) and 40-42 (GHT). Catalysis depends on aspartate 13, which acts as the Proton acceptor. Residues aspartate 13 and glycine 40 each contribute to the Mg(2+) site. IMP is bound by residues 13 to 16 (DEGK), 38 to 41 (NAGH), threonine 128, arginine 142, glutamine 223, threonine 238, and arginine 302. Histidine 41 (proton donor) is an active-site residue. A substrate-binding site is contributed by 298–304 (TTTGRRR). Residues arginine 304, 330–332 (KLD), and 412–414 (SLG) each bind GTP.

Belongs to the adenylosuccinate synthetase family. In terms of assembly, homodimer. Mg(2+) serves as cofactor.

It is found in the cytoplasm. The enzyme catalyses IMP + L-aspartate + GTP = N(6)-(1,2-dicarboxyethyl)-AMP + GDP + phosphate + 2 H(+). It functions in the pathway purine metabolism; AMP biosynthesis via de novo pathway; AMP from IMP: step 1/2. Plays an important role in the de novo pathway of purine nucleotide biosynthesis. Catalyzes the first committed step in the biosynthesis of AMP from IMP. The chain is Adenylosuccinate synthetase from Picosynechococcus sp. (strain ATCC 27264 / PCC 7002 / PR-6) (Agmenellum quadruplicatum).